A 220-amino-acid chain; its full sequence is Urease accessory protein UreF (220 aa).

Belongs to the UreF family. As to quaternary structure, ureD, UreF and UreG form a complex that acts as a GTP-hydrolysis-dependent molecular chaperone, activating the urease apoprotein by helping to assemble the nickel containing metallocenter of UreC. The UreE protein probably delivers the nickel.

It localises to the cytoplasm. Required for maturation of urease via the functional incorporation of the urease nickel metallocenter. This Bordetella parapertussis (strain 12822 / ATCC BAA-587 / NCTC 13253) protein is Urease accessory protein UreF.